The sequence spans 299 residues: Taste receptor type 2 member 4 (299 aa).

Over 1–9 the chain is Extracellular; that stretch reads MLWLFYSSA. A helical transmembrane segment spans residues 10-30; sequence IIASVILDFVGIIMSLFITVV. Topologically, residues 31–46 are cytoplasmic; that stretch reads NYKTWVKSHRISSSER. A helical transmembrane segment spans residues 47 to 67; the sequence is ILFSLGITRFFMLALFLVNTI. Residues 68–81 lie on the Extracellular side of the membrane; the sequence is YFVSSNKERSVYLS. Residues 82–102 form a helical membrane-spanning segment; that stretch reads AFFVLCFMFLDSSSLWFVTLL. The Cytoplasmic portion of the chain corresponds to 103–131; it reads NSLYCVKITNFQHSVFLLLKRNISPKIPR. Residues 132–152 traverse the membrane as a helical segment; the sequence is LLPACVLISAFTTCLYITLSQ. Residues 153-172 lie on the Extracellular side of the membrane; that stretch reads ASPFPELVTKRNNTSFNISE. Residues Asn164, Asn165, and Asn169 are each glycosylated (N-linked (GlcNAc...) asparagine). The helical transmembrane segment at 173 to 193 threads the bilayer; the sequence is GILSLVVSFVLSSSLQFIINV. Residues 194–230 are Cytoplasmic-facing; sequence TSASLLIYSLRRHIRKMQKNATGFWNPQTEAHVGAMK. The chain crosses the membrane as a helical span at residues 231–251; the sequence is LMIYFLILYIPYSVATLVQYL. The Extracellular portion of the chain corresponds to 252-262; sequence PFYAGMDMGTK. Residues 263–283 traverse the membrane as a helical segment; the sequence is SICLIFATLYSPGHSVLIIIT. Residues 284–299 lie on the Cytoplasmic side of the membrane; that stretch reads HPKLKTTAKKILCFKK.

It belongs to the G-protein coupled receptor T2R family.

It localises to the membrane. Its subcellular location is the cell projection. It is found in the cilium membrane. Its function is as follows. Gustducin-coupled receptor implicated in the perception of bitter compounds in the oral cavity and the gastrointestinal tract. Signals through PLCB2 and the calcium-regulated cation channel TRPM5. In airway epithelial cells, binding of denatonium increases the intracellular calcium ion concentration and stimulates ciliary beat frequency. The chain is Taste receptor type 2 member 4 (TAS2R4) from Papio hamadryas (Hamadryas baboon).